Reading from the N-terminus, the 512-residue chain is 2-isopropylmalate synthase (512 aa).

Residues Val5 to Tyr267 form the Pyruvate carboxyltransferase domain. Mn(2+) contacts are provided by Asp14, His202, His204, and Asn238. A regulatory domain region spans residues Ser391–Val512.

This sequence belongs to the alpha-IPM synthase/homocitrate synthase family. LeuA type 1 subfamily. As to quaternary structure, homodimer. Mn(2+) is required as a cofactor.

It is found in the cytoplasm. It catalyses the reaction 3-methyl-2-oxobutanoate + acetyl-CoA + H2O = (2S)-2-isopropylmalate + CoA + H(+). Its pathway is amino-acid biosynthesis; L-leucine biosynthesis; L-leucine from 3-methyl-2-oxobutanoate: step 1/4. Catalyzes the condensation of the acetyl group of acetyl-CoA with 3-methyl-2-oxobutanoate (2-ketoisovalerate) to form 3-carboxy-3-hydroxy-4-methylpentanoate (2-isopropylmalate). The sequence is that of 2-isopropylmalate synthase from Heliobacterium modesticaldum (strain ATCC 51547 / Ice1).